Consider the following 186-residue polypeptide: NADH-dependent FMN reductase SfnE (186 aa).

This sequence belongs to the SsuE family.

It carries out the reaction FMNH2 + NAD(+) = FMN + NADH + 2 H(+). Involved in the dimethyl sulfide degradation pathway. Catalyzes the NADH-dependent reduction of FMN. This Pseudomonas putida (Arthrobacter siderocapsulatus) protein is NADH-dependent FMN reductase SfnE.